A 219-amino-acid chain; its full sequence is Probable nicotinate-nucleotide adenylyltransferase (219 aa).

It belongs to the NadD family.

It carries out the reaction nicotinate beta-D-ribonucleotide + ATP + H(+) = deamido-NAD(+) + diphosphate. The protein operates within cofactor biosynthesis; NAD(+) biosynthesis; deamido-NAD(+) from nicotinate D-ribonucleotide: step 1/1. Its function is as follows. Catalyzes the reversible adenylation of nicotinate mononucleotide (NaMN) to nicotinic acid adenine dinucleotide (NaAD). This chain is Probable nicotinate-nucleotide adenylyltransferase, found in Erythrobacter litoralis (strain HTCC2594).